Consider the following 854-residue polypeptide: ATP-dependent zinc metalloprotease FtsH (854 aa).

At 1–5 (MNRKT) the chain is on the cytoplasmic side. A helical membrane pass occupies residues 6–26 (VFRNVLLVAVVLLVIYAFSYF). At 27–112 (SNDTRDFKTV…FNTTVTQESW (86 aa)) the chain is on the extracellular side. The helical transmembrane segment at 113–133 (LTSILLFVLPMIILFGIFFFV) threads the bilayer. At 134 to 854 (MNRMQGGGGR…ARWDGPDGSR (721 aa)) the chain is on the cytoplasmic side. 207–214 (GPPGTGKT) is a binding site for ATP. H429 is a Zn(2+) binding site. Residue E430 is part of the active site. Residues H433 and D505 each contribute to the Zn(2+) site. The disordered stretch occupies residues 658 to 854 (AGAPNSGVPN…ARWDGPDGSR (197 aa)). Composition is skewed to low complexity over residues 661–692 (PNSG…AQPS) and 698–719 (APQQ…WSAP). Positions 720 to 730 (GWPPRENPSPT) are enriched in pro residues. The segment covering 749 to 778 (NQSQGQYGQPQHGQPQPDQGQYGQPHPGQQ) has biased composition (low complexity). Residues 812 to 822 (GNPSGENQWQS) are compositionally biased toward polar residues. The span at 825-834 (PEQPQTPPPH) shows a compositional bias: pro residues.

It in the central section; belongs to the AAA ATPase family. The protein in the C-terminal section; belongs to the peptidase M41 family. In terms of assembly, homohexamer. Zn(2+) is required as a cofactor.

It is found in the cell membrane. Its function is as follows. Acts as a processive, ATP-dependent zinc metallopeptidase for both cytoplasmic and membrane proteins. Plays a role in the quality control of integral membrane proteins. The polypeptide is ATP-dependent zinc metalloprotease FtsH (Rhodococcus erythropolis (strain PR4 / NBRC 100887)).